Reading from the N-terminus, the 147-residue chain is 3-dehydroquinate dehydratase (147 aa).

Tyr25 serves as the catalytic Proton acceptor. Residues Asn76, His82, and Asp89 each coordinate substrate. The active-site Proton donor is His102. Substrate contacts are provided by residues 103–104 (IS) and Arg113.

This sequence belongs to the type-II 3-dehydroquinase family. Homododecamer.

It catalyses the reaction 3-dehydroquinate = 3-dehydroshikimate + H2O. It participates in metabolic intermediate biosynthesis; chorismate biosynthesis; chorismate from D-erythrose 4-phosphate and phosphoenolpyruvate: step 3/7. In terms of biological role, catalyzes a trans-dehydration via an enolate intermediate. The polypeptide is 3-dehydroquinate dehydratase (Mycobacterium tuberculosis (strain ATCC 25177 / H37Ra)).